The primary structure comprises 511 residues: Protoheme IX farnesyltransferase, mitochondrial (511 aa).

The transit peptide at 1-23 (MSSSTESLPGTLRRTLTTSRAPA) directs the protein to the mitochondrion. 2 disordered regions span residues 1-27 (MSSSTESLPGTLRRTLTTSRAPAATSS) and 50-136 (HDSA…LAPD). Composition is skewed to low complexity over residues 52–79 (SASSQRSTTVASTTSTTADAADGSSSTT), 104–115 (RKAAAAAAAAAA), and 126–136 (PDAPTADLAPD). The next 8 membrane-spanning stretches (helical) occupy residues 168-188 (LTVLVVLSAMVPYALYPVPSF), 197-217 (SLAPSLSPLTLLFLTTGTTLC), 253-273 (AAVLFAVGCGLAGTLALYFGV), 275-295 (PTVSFLGAANIALYAGAYTPL), 303-323 (TWVGAIVGGIPPLMGWAAAAG), 344-364 (LGGWLFAGLLFAWQFPHFMPL), 398-418 (AFIPLCVGLSATGVTEWSFAV), and 444-464 (ARGLFWASVWHLPVIMVLALA).

Belongs to the UbiA prenyltransferase family.

It is found in the mitochondrion membrane. In terms of biological role, converts protoheme IX and farnesyl diphosphate to heme O. This Neurospora crassa (strain ATCC 24698 / 74-OR23-1A / CBS 708.71 / DSM 1257 / FGSC 987) protein is Protoheme IX farnesyltransferase, mitochondrial (pft-1).